Consider the following 326-residue polypeptide: Gamma-resorcylate decarboxylase (326 aa).

4 residues coordinate Mn(2+): E8, H10, H164, and D287. The active site involves D287.

This sequence belongs to the metallo-dependent hydrolases superfamily. ACMSD family. Homotetramer. Requires Mn(2+) as cofactor.

It carries out the reaction 2,6-dihydroxybenzoate + H(+) = resorcinol + CO2. It catalyses the reaction 2,3-dihydroxybenzoate + H(+) = catechol + CO2. It functions in the pathway aromatic compound metabolism. With respect to regulation, activity is inhibited by 2-nitroresorcinol (2-NR). Its function is as follows. Involved in the gamma-resorcylate (2,6-dihydroxybenzoate) catabolism. Catalyzes the reversible decarboxylation of gamma-resorcylate to resorcinol. Also catalyzes the decarboxylation of 2,3-dihydroxybenzoate to catechol, 2,4,6-trihydroxybenzoate to benzene-1,3,5-triol, and 2,6-dihydroxy-4-methylbenzoate to 5-methylbenzene-1,3-diol. This chain is Gamma-resorcylate decarboxylase, found in Polaromonas sp. (strain JS666 / ATCC BAA-500).